Consider the following 469-residue polypeptide: ATP synthase subunit beta (469 aa).

153–160 is an ATP binding site; it reads GGAGVGKT.

Belongs to the ATPase alpha/beta chains family. As to quaternary structure, F-type ATPases have 2 components, CF(1) - the catalytic core - and CF(0) - the membrane proton channel. CF(1) has five subunits: alpha(3), beta(3), gamma(1), delta(1), epsilon(1). CF(0) has three main subunits: a(1), b(2) and c(9-12). The alpha and beta chains form an alternating ring which encloses part of the gamma chain. CF(1) is attached to CF(0) by a central stalk formed by the gamma and epsilon chains, while a peripheral stalk is formed by the delta and b chains.

Its subcellular location is the cell inner membrane. It catalyses the reaction ATP + H2O + 4 H(+)(in) = ADP + phosphate + 5 H(+)(out). In terms of biological role, produces ATP from ADP in the presence of a proton gradient across the membrane. The catalytic sites are hosted primarily by the beta subunits. In Pseudothermotoga lettingae (strain ATCC BAA-301 / DSM 14385 / NBRC 107922 / TMO) (Thermotoga lettingae), this protein is ATP synthase subunit beta.